Reading from the N-terminus, the 306-residue chain is Recombination-associated protein RdgC (306 aa).

Belongs to the RdgC family.

The protein resides in the cytoplasm. The protein localises to the nucleoid. May be involved in recombination. The protein is Recombination-associated protein RdgC of Pseudomonas entomophila (strain L48).